The primary structure comprises 55 residues: uncharacterized protein (55 aa).

This is an uncharacterized protein from Acidithiobacillus ferrooxidans (Thiobacillus ferrooxidans).